A 424-amino-acid chain; its full sequence is Gamma-glutamyl phosphate reductase (424 aa).

Belongs to the gamma-glutamyl phosphate reductase family.

The protein localises to the cytoplasm. It carries out the reaction L-glutamate 5-semialdehyde + phosphate + NADP(+) = L-glutamyl 5-phosphate + NADPH + H(+). Its pathway is amino-acid biosynthesis; L-proline biosynthesis; L-glutamate 5-semialdehyde from L-glutamate: step 2/2. In terms of biological role, catalyzes the NADPH-dependent reduction of L-glutamate 5-phosphate into L-glutamate 5-semialdehyde and phosphate. The product spontaneously undergoes cyclization to form 1-pyrroline-5-carboxylate. This chain is Gamma-glutamyl phosphate reductase, found in Parvibaculum lavamentivorans (strain DS-1 / DSM 13023 / NCIMB 13966).